We begin with the raw amino-acid sequence, 381 residues long: Dual-specificity RNA methyltransferase RlmN (381 aa).

Catalysis depends on Glu96, which acts as the Proton acceptor. Residues 102–342 (TDDRGTLCVS…TRTTRGDDID (241 aa)) enclose the Radical SAM core domain. An intrachain disulfide couples Cys109 to Cys345. Positions 116, 120, and 123 each coordinate [4Fe-4S] cluster. S-adenosyl-L-methionine contacts are provided by residues 170 to 171 (GE), Ser202, 224 to 226 (SLH), and Asn302. Cys345 (S-methylcysteine intermediate) is an active-site residue.

It belongs to the radical SAM superfamily. RlmN family. [4Fe-4S] cluster serves as cofactor.

It is found in the cytoplasm. It carries out the reaction adenosine(2503) in 23S rRNA + 2 reduced [2Fe-2S]-[ferredoxin] + 2 S-adenosyl-L-methionine = 2-methyladenosine(2503) in 23S rRNA + 5'-deoxyadenosine + L-methionine + 2 oxidized [2Fe-2S]-[ferredoxin] + S-adenosyl-L-homocysteine. It catalyses the reaction adenosine(37) in tRNA + 2 reduced [2Fe-2S]-[ferredoxin] + 2 S-adenosyl-L-methionine = 2-methyladenosine(37) in tRNA + 5'-deoxyadenosine + L-methionine + 2 oxidized [2Fe-2S]-[ferredoxin] + S-adenosyl-L-homocysteine. Its function is as follows. Specifically methylates position 2 of adenine 2503 in 23S rRNA and position 2 of adenine 37 in tRNAs. m2A2503 modification seems to play a crucial role in the proofreading step occurring at the peptidyl transferase center and thus would serve to optimize ribosomal fidelity. The sequence is that of Dual-specificity RNA methyltransferase RlmN from Pseudomonas putida (strain GB-1).